Here is a 150-residue protein sequence, read N- to C-terminus: FAD synthase (150 aa).

Residues 8–9 (AF), 13–16 (HPGH), aspartate 95, and histidine 122 contribute to the ATP site.

It belongs to the archaeal FAD synthase family. Homodimer. It depends on a divalent metal cation as a cofactor.

The enzyme catalyses FMN + ATP + H(+) = FAD + diphosphate. It functions in the pathway cofactor biosynthesis; FAD biosynthesis; FAD from FMN: step 1/1. Catalyzes the transfer of the AMP portion of ATP to flavin mononucleotide (FMN) to produce flavin adenine dinucleotide (FAD) coenzyme. The sequence is that of FAD synthase from Methanobrevibacter ruminantium (strain ATCC 35063 / DSM 1093 / JCM 13430 / OCM 146 / M1) (Methanobacterium ruminantium).